We begin with the raw amino-acid sequence, 226 residues long: MKKAVILISGGLDSTTCLAVAKSKGFSCYALSFDYGQKHHSELVAAEKIAAHFNVVRYEVVTLSIGKLGGSALTDNSLDVPDYGGNESIPITYVPARNTIFLSIALGWAEILDAESILIGASAIDYSGYPDCRPEYIAAFQNLANLATKRGIEGHSIKIEAPLIHLSKAETIKLGYSLGVDYSMTVSCYRANEEGLACGYCDSCELRKKGFKEAEIKDPTQYITKV.

An ATP-binding site is contributed by 8 to 18 (ISGGLDSTTCL). Residues C188, C198, C201, and C204 each contribute to the Zn(2+) site.

Belongs to the QueC family. Zn(2+) serves as cofactor.

It carries out the reaction 7-carboxy-7-deazaguanine + NH4(+) + ATP = 7-cyano-7-deazaguanine + ADP + phosphate + H2O + H(+). It participates in purine metabolism; 7-cyano-7-deazaguanine biosynthesis. Functionally, catalyzes the ATP-dependent conversion of 7-carboxy-7-deazaguanine (CDG) to 7-cyano-7-deazaguanine (preQ(0)). The chain is 7-cyano-7-deazaguanine synthase from Coxiella burnetii (strain RSA 493 / Nine Mile phase I).